The following is a 449-amino-acid chain: Heterogeneous nuclear ribonucleoprotein H (449 aa).

The residue at position 1 (Met1) is an N-acetylmethionine. Met2 is modified (N-acetylmethionine; in Heterogeneous nuclear ribonucleoprotein H, N-terminally processed). The region spanning Phe11–Asn90 is the RRM 1 domain. Phosphoserine is present on Ser23. Residue Lys35 forms a Glycyl lysine isopeptide (Lys-Gly) (interchain with G-Cter in SUMO2) linkage. 2 positions are modified to phosphoserine: Ser54 and Ser63. Residues Lys87 and Lys98 each participate in a glycyl lysine isopeptide (Lys-Gly) (interchain with G-Cter in SUMO2) cross-link. The RRM 2 domain maps to Gly111–Arg188. Position 233 is a dimethylated arginine; alternate (Arg233). Residue Arg233 is modified to Omega-N-methylarginine; alternate. The stretch at Gly234–Tyr249 is one 1-1 repeat. The 2 X 16 AA Gly-rich approximate repeats stretch occupies residues Gly234–Tyr433. The residue at position 246 (Tyr246) is a Phosphotyrosine. The RRM 3 domain occupies His289–Thr364. Ser310 bears the Phosphoserine mark. 3 repeat units span residues His354–Tyr372, His374–Tyr392, and Gly418–Tyr433. The interval His354 to Tyr392 is 2 X 19 AA perfect repeats.

Part of a ternary complex containing FUBP2, PTBP1, PTBP2 and HNRNPH1. Identified in the spliceosome C complex. Interacts with IGF2BP1. Interacts with CUGBP1; the interaction is RNA-dependent. Interacts with MBNL1; the interaction in RNA-independent.

Its subcellular location is the nucleus. It is found in the nucleoplasm. Its function is as follows. This protein is a component of the heterogeneous nuclear ribonucleoprotein (hnRNP) complexes which provide the substrate for the processing events that pre-mRNAs undergo before becoming functional, translatable mRNAs in the cytoplasm. Mediates pre-mRNA alternative splicing regulation. Inhibits, together with CUGBP1, insulin receptor (IR) pre-mRNA exon 11 inclusion in myoblast. Binds to the IR RNA. Binds poly(RG). This chain is Heterogeneous nuclear ribonucleoprotein H (Hnrnph1), found in Rattus norvegicus (Rat).